The sequence spans 471 residues: 5-hydroxytryptamine receptor 2A (471 aa).

The Extracellular portion of the chain corresponds to 1–80 (MDILCEENTS…LQEKNWSALL (80 aa)). Residues Asn-8, Asn-38, Asn-44, Asn-51, and Asn-54 are each glycosylated (N-linked (GlcNAc...) asparagine). Residues 81–97 (TAVVIILTIAGNILVIM) form a helical membrane-spanning segment. Residues 98 to 111 (AVSLEKKLQNATNY) are Cytoplasmic-facing. A helical membrane pass occupies residues 112 to 137 (FLMSLAIADMLLGFLVMPVSMLTILY). Residues 138 to 146 (GYRWPLPSK) lie on the Extracellular side of the membrane. The helical transmembrane segment at 147–171 (LCAVWIYLDVLFSTASIMHLCAISL) threads the bilayer. Cysteines 148 and 227 form a disulfide. Residue Asp-155 coordinates serotonin. Positions 172–174 (DRY) match the DRY motif; important for ligand-induced conformation changes motif. At 172–191 (DRYVAIQNPIHHSRFNSRTK) the chain is on the cytoplasmic side. A helical transmembrane segment spans residues 192-215 (AFLKIIAVWTISVGISMPIPVFGL). The Extracellular segment spans residues 216 to 232 (QDDSKVFKEGSCLLADD). A helical transmembrane segment spans residues 233 to 258 (NFVLIGSFVSFFIPLTIMVITYFLTI). Residues 259–322 (KSLQKEATLC…QSISNEQKAC (64 aa)) lie on the Cytoplasmic side of the membrane. Phosphoserine is present on Ser-280. The chain crosses the membrane as a helical span at residues 323-348 (KVLGIVFFLFVVMWCPFFITNIMAVI). A serotonin-binding site is contributed by Asn-343. A disulfide bridge connects residues Cys-349 and Cys-353. The Extracellular segment spans residues 349–356 (CKESCNED). The chain crosses the membrane as a helical span at residues 357–382 (VIGALLNVFVWIGYLSSAVNPLVYTL). The NPxxY motif; important for ligand-induced conformation changes and signaling signature appears at 376-380 (NPLVY). Residues 383-471 (FNKTYRSAFS…DGVNEKVSCV (89 aa)) are Cytoplasmic-facing. Residues 451 to 465 (QHSEEASKDNSDGVN) are compositionally biased toward basic and acidic residues. The disordered stretch occupies residues 451–471 (QHSEEASKDNSDGVNEKVSCV). The short motif at 469–471 (SCV) is the PDZ-binding element.

Belongs to the G-protein coupled receptor 1 family. In terms of assembly, interacts (via C-terminus) with MPDZ and PATJ. May interact (via C-terminus) with MPP3, PRDX6, DLG4, DLG1, CASK, APBA1 and MAGI2. Interacts with GRM2 and DRD2; this may affect signaling. In terms of tissue distribution, detected in brain cortex (at protein level). Detected in blood platelets.

It is found in the cell membrane. The protein localises to the cell projection. Its subcellular location is the dendrite. It localises to the axon. The protein resides in the cytoplasmic vesicle. It is found in the membrane. The protein localises to the caveola. Its subcellular location is the presynapse. Its activity is regulated as follows. G-protein coupled receptor activity is regulated by lipids: oleamide increases HTR2A-mediated activity. Inhibited by IHCH-7179 small molecule: IHCH-7179 acts both as an agonist activator for HTR1A and as an antagonist inhibitor for HTR2A. Its function is as follows. G-protein coupled receptor for 5-hydroxytryptamine (serotonin). Also functions as a receptor for various drugs and psychoactive substances, including mescaline, psilocybin, 1-(2,5-dimethoxy-4-iodophenyl)-2-aminopropane (DOI) and lysergic acid diethylamide (LSD). Ligand binding causes a conformation change that triggers signaling via guanine nucleotide-binding proteins (G proteins) and modulates the activity of downstream effectors. HTR2A is coupled to G(q)/G(11) G alpha proteins and activates phospholipase C-beta, releasing diacylglycerol (DAG) and inositol 1,4,5-trisphosphate (IP3) second messengers that modulate the activity of phosphatidylinositol 3-kinase and promote the release of Ca(2+) ions from intracellular stores, respectively. Beta-arrestin family members inhibit signaling via G proteins and mediate activation of alternative signaling pathways. Affects neural activity, perception, cognition and mood. Plays a role in the regulation of behavior, including responses to anxiogenic situations and psychoactive substances. Plays a role in intestinal smooth muscle contraction, and may play a role in arterial vasoconstriction. In terms of biological role, (Microbial infection) Acts as a receptor for human JC polyomavirus/JCPyV. In Homo sapiens (Human), this protein is 5-hydroxytryptamine receptor 2A.